The primary structure comprises 205 residues: Recombination protein RecR (205 aa).

Residues 64–79 (CRRCFNITVDELCPIC) form a C4-type zinc finger. One can recognise a Toprim domain in the interval 87–182 (TKICVVEEPL…RVTRPARGLP (96 aa)).

The protein belongs to the RecR family.

Functionally, may play a role in DNA repair. It seems to be involved in an RecBC-independent recombinational process of DNA repair. It may act with RecF and RecO. The sequence is that of Recombination protein RecR from Chloroflexus aggregans (strain MD-66 / DSM 9485).